The sequence spans 402 residues: Deacetylase Oant_2987 (402 aa).

The Zn(2+) site is built by His-70, His-72, Lys-168, His-201, His-224, and Asp-284. At Lys-168 the chain carries N6-carboxylysine.

This sequence belongs to the metallo-dependent hydrolases superfamily. Atu3266/EF_0837 deacetylase family. The cofactor is Zn(2+).

In terms of biological role, esterase that catalyzes the deacetylation of acetyl-(R)-mandelate (in vitro). Can also hydrolyze acetyl glycolate, but with lower efficiency. Has very low N-acetyl-D-amino acid deacetylase activity with N-acetyl-D-serine and N-acetyl-D-threonine (in vitro). Theoretical substrate docking studies suggest that other N-acetylated amino acids may optimally occupy the active site and may in fact be the physiological substrates. The sequence is that of Deacetylase Oant_2987 from Brucella anthropi (strain ATCC 49188 / DSM 6882 / CCUG 24695 / JCM 21032 / LMG 3331 / NBRC 15819 / NCTC 12168 / Alc 37) (Ochrobactrum anthropi).